We begin with the raw amino-acid sequence, 530 residues long: Na(+)/H(+) antiporter NhaB (530 aa).

Transmembrane regions (helical) follow at residues 13–33, 34–54, 90–110, 121–141, 145–165, 205–225, 241–261, 306–326, 351–371, 393–413, 455–475, and 481–501; these read FLGKAPDWYKIAILSFLVINP, LVFFFVDPFTAGWLLVVEFIF, LVANIEVLLLLVFMVAGIYFM, ILIGIKSKTALSVAFCFTAAF, FLDALTVIAVVISVAVGFYAI, LLMHAGVGTALGGVMTMVGEP, FIIRMLPITAPVFICGILTCI, GLIAVWLIVGLALHLAAVGLI, EEALPFTALLAVFFAVVAVII, LALFYVANGLLSMVSDNVFVG, GQAAFLFLLTSALAPLIQLSY, and MALPYTIVLALVGMFGIIFFL.

This sequence belongs to the NhaB Na(+)/H(+) (TC 2.A.34) antiporter family.

It localises to the cell inner membrane. It catalyses the reaction 2 Na(+)(in) + 3 H(+)(out) = 2 Na(+)(out) + 3 H(+)(in). Na(+)/H(+) antiporter that extrudes sodium in exchange for external protons. This is Na(+)/H(+) antiporter NhaB from Aliivibrio fischeri (strain ATCC 700601 / ES114) (Vibrio fischeri).